Reading from the N-terminus, the 350-residue chain is Neutral protease 2 homolog SNOG_10522 (350 aa).

An N-terminal signal peptide occupies residues 1–18 (MKVSSQLAVAALASFATA). Residues 19–180 (ASVDVHKRET…AKALNKRTAI (162 aa)) constitute a propeptide that is removed on maturation. Intrachain disulfides connect cysteine 184/cysteine 251 and cysteine 258/cysteine 276. Histidine 301 is a binding site for Zn(2+). The active site involves glutamate 302. Histidine 305 and aspartate 316 together coordinate Zn(2+).

It belongs to the peptidase M35 family. Zn(2+) is required as a cofactor.

The protein resides in the secreted. It carries out the reaction Preferential cleavage of bonds with hydrophobic residues in P1'. Also 3-Asn-|-Gln-4 and 8-Gly-|-Ser-9 bonds in insulin B chain.. In terms of biological role, secreted metalloproteinase that allows assimilation of proteinaceous substrates. Shows high activities on basic nuclear substrates such as histone and protamine. The sequence is that of Neutral protease 2 homolog SNOG_10522 from Phaeosphaeria nodorum (strain SN15 / ATCC MYA-4574 / FGSC 10173) (Glume blotch fungus).